The primary structure comprises 394 residues: MSKEKFNRSKPHINVGTIGHVDHGKTTLTSAITTVLSKRFGGKACAFEQIDNAPEEKARGITINTSHVEYDTELRHYAHVDCPGHADYIKNMITGAAQMDGAILVVAATDGPMPQTREHILLGRQVGVPHIIVFLNKCDMVDDEELLELVEMEVRDLLTQYDFPGDNIPIIRGSALKALEGEKIWEDKIIELANSLDKYIPIPVRAVDEPFLLPIEDVFSISGRGTVVTGRIERGILKVGEEVEIVGIKSTTKTICTGVEMFRKLLDEGRAGENVGILLRGTKREDIERGQVLAKPGTINPHVKFESEVYVLSKEEGGRHTPFFKGYRPQFYFRTTDVTGSIELPENIEMVMPGDNINMVVTLIHPIAMAEGLRFAIREGGRTVGAGVVTKVIA.

In terms of domain architecture, tr-type G spans 10 to 204 (KPHINVGTIG…SLDKYIPIPV (195 aa)). A G1 region spans residues 19 to 26 (GHVDHGKT). 19 to 26 (GHVDHGKT) contacts GTP. Thr-26 serves as a coordination point for Mg(2+). The tract at residues 60 to 64 (GITIN) is G2. Positions 81–84 (DCPG) are G3. Residues 81 to 85 (DCPGH) and 136 to 139 (NKCD) contribute to the GTP site. A G4 region spans residues 136–139 (NKCD). The tract at residues 174–176 (SAL) is G5.

The protein belongs to the TRAFAC class translation factor GTPase superfamily. Classic translation factor GTPase family. EF-Tu/EF-1A subfamily. As to quaternary structure, monomer.

The protein localises to the cytoplasm. It catalyses the reaction GTP + H2O = GDP + phosphate + H(+). In terms of biological role, GTP hydrolase that promotes the GTP-dependent binding of aminoacyl-tRNA to the A-site of ribosomes during protein biosynthesis. The chain is Elongation factor Tu from Buchnera aphidicola subsp. Cinara cedri (strain Cc).